The primary structure comprises 157 residues: Ribosomal RNA large subunit methyltransferase H (157 aa).

S-adenosyl-L-methionine-binding positions include Gly104 and 123–128 (LSSLTL).

Belongs to the RNA methyltransferase RlmH family. In terms of assembly, homodimer.

It localises to the cytoplasm. It carries out the reaction pseudouridine(1915) in 23S rRNA + S-adenosyl-L-methionine = N(3)-methylpseudouridine(1915) in 23S rRNA + S-adenosyl-L-homocysteine + H(+). Its function is as follows. Specifically methylates the pseudouridine at position 1915 (m3Psi1915) in 23S rRNA. This Nitrosococcus oceani (strain ATCC 19707 / BCRC 17464 / JCM 30415 / NCIMB 11848 / C-107) protein is Ribosomal RNA large subunit methyltransferase H.